We begin with the raw amino-acid sequence, 125 residues long: RxLR effector protein Avh6 (125 aa).

Residues 1-25 (MRLSSTTFVVLAAVLLASGTAVSKA) form the signal peptide. Positions 48–70 (RFLRSHHTEDGKAKLSNYDNEER) match the RxLR-dEER motif.

Belongs to the RxLR effector family.

It localises to the secreted. It is found in the host cell. Its function is as follows. Effector that suppresses plant defense responses during the early stages of pathogen infection. Suppresses cell death induced by effectors and PAMPs in plant hosts. Triggers a hypersensitive response (HR) in the presence of Rps1d. Suppresses BAX-induced cell death and enhanced P.capsici infection in Nicotiana benthamiana. Also suppresses effector-triggered immunity induction by associating with Avr1b and Rps1b, suggesting a role in suppressing plant immunity. The protein is RxLR effector protein Avh6 of Phytophthora sojae (Soybean stem and root rot agent).